The primary structure comprises 247 residues: Adenosylcobinamide-GDP ribazoletransferase (247 aa).

5 helical membrane passes run 34-54 (IITF…VFMV), 59-79 (CGAP…TGGF), 113-133 (GGLA…ELAL), 138-158 (ILAS…LLMY), and 194-214 (VLLP…AIFI).

The protein belongs to the CobS family. Mg(2+) is required as a cofactor.

Its subcellular location is the cell inner membrane. The enzyme catalyses alpha-ribazole + adenosylcob(III)inamide-GDP = adenosylcob(III)alamin + GMP + H(+). It carries out the reaction alpha-ribazole 5'-phosphate + adenosylcob(III)inamide-GDP = adenosylcob(III)alamin 5'-phosphate + GMP + H(+). It participates in cofactor biosynthesis; adenosylcobalamin biosynthesis; adenosylcobalamin from cob(II)yrinate a,c-diamide: step 7/7. Its function is as follows. Joins adenosylcobinamide-GDP and alpha-ribazole to generate adenosylcobalamin (Ado-cobalamin). Also synthesizes adenosylcobalamin 5'-phosphate from adenosylcobinamide-GDP and alpha-ribazole 5'-phosphate. The protein is Adenosylcobinamide-GDP ribazoletransferase of Escherichia coli O45:K1 (strain S88 / ExPEC).